Reading from the N-terminus, the 398-residue chain is Homeobox protein knotted-1-like 1 (398 aa).

3 disordered regions span residues 20-61, 78-102, and 241-273; these read SPIS…HHHQ, NCFRSDHDQPNNNNNPSVKSEASSS, and LNNPDGKSDNMGSSDEEQENNSGGETELPEIDP. A compositionally biased stretch (low complexity) spans 23-56; the sequence is SSSNKNDNTSDTNNNNNNNNSSNYGPGYNNTNNN. A compositionally biased stretch (polar residues) spans 87 to 102; the sequence is PNNNNNPSVKSEASSS. The ELK domain maps to 279–299; that stretch reads ELKNHLLKKYSGYLSSLKQEL. A DNA-binding region (homeobox; TALE-type) is located at residues 300 to 363; sequence SKKKKKGKLP…NQRKRHWKPS (64 aa).

The protein belongs to the TALE/KNOX homeobox family. As to quaternary structure, may form heterodimeric complex with the TALE/BELL proteins BEL1, BLH2, BLH8/PNF and BLH9/PNY. Interacts with OFP1, OFP2, OFP4, OFP6 and OFP12. Interacts with CCT7 and CCT8. Interacts with KNATM-B. Binds to AGO10/PNH. Interacts with BZIP30. Expressed in the vegetative meristem. Present in the base of flower primordia.

The protein resides in the nucleus. May play a role in meristem function, and may be involved in maintaining cells in an undifferentiated, meristematic state, and its expression disappears at the same time the shoot apex undergoes the transition from vegetative to reproductive development. Positive regulator of LATERAL ORGAN BOUNDARIES (LOB). Probably binds to the DNA sequence 5'-TGAC-3'. Able to traffic from the L1 to the L2/L3 layers of the meristem, presumably through plasmodesmata. The protein is Homeobox protein knotted-1-like 1 (KNAT1) of Arabidopsis thaliana (Mouse-ear cress).